A 34-amino-acid chain; its full sequence is Cycloamanide E proprotein (34 aa).

A propeptide spanning residues Met1 to Pro10 is cleaved from the precursor. The segment at residues Ser11–Pro17 is a cross-link (cyclopeptide (Ser-Pro)). Residues Cys18–Cys34 constitute a propeptide that is removed on maturation.

This sequence belongs to the MSDIN fungal toxin family. Processed by the macrocyclase-peptidase enzyme POPB to yield a cyclic decapeptide. POPB first removes 10 residues from the N-terminus. Conformational trapping of the remaining peptide forces the enzyme to release this intermediate rather than proceed to macrocyclization. The enzyme rebinds the remaining peptide in a different conformation and catalyzes macrocyclization of the N-terminal 7 residues.

Functionally, cyclic heptapeptide that belongs to the MSDIN-like toxin family responsible for a large number of food poisoning cases and deaths. Cycloaminide E is structurally related to other cycloamanides that are non-toxic to mammals but show immunosuppressive activity. This Amanita phalloides (Death cap) protein is Cycloamanide E proprotein.